A 717-amino-acid polypeptide reads, in one-letter code: MTSSTPLYDENEDYIDENHINTFAKALLWEDDDHDGLASPPLPAYEGDKLAEVNAEELSSVLTPEPNNESEKSRPEFVVSHNDWYPINAPEKSKAKADAKGRKKRASTRDEFRSSAAYTLLRWPFLIIITVWILLLCILYTVVRAYVALSEYMLTWVGERKVLRNKLRASKTYEEWIENALELDRYLHLDKWSSIPRFSYYDYRTVKRTTSKLRMLRMRGMDEELMVFLQGCLKKNFAGIENRQLYAHRYYGTKNVVHVYIDEVVASIDHVTESENITPEDKRRFFRSVSRNYGRTALCLSGGACFAYTHFGIVKALLDNDLLPSIITGTSGGGLVAALACTRTDDELKQLLVPRLARKITACEDPWYVWIPRWWRTGARFDSTAWARKSNYFTLGSLTFQEAYHRTGRRLNISTVPADPHSPVILCNNITAPNCIIWSCLLASSAVPGILNPVVLMMKDSKKNTIVPFSLGSKWKDGSLRTDIPIDALKTYYNVNFTVVSQVNPHISLFFFAPKGSVGRPVASSRRKTRREKYASLRGGFIATALEHLFKLEIKKWLEMIKTLDLLPRLSESDWSSIWLQRFTGSITIWPRNNFRDFWYILSDPSEEGLGEMIRKGERYMFPKILFLKHRLSIENAIERGRTKSKLSTAHLEHSPRFSGTPEFAGPEFQLQTVHYDDDYDSESSAEETLSPGFSQGTHAVLTDESDDDSSDDEIDD.

A helical membrane pass occupies residues 123–143 (WPFLIIITVWILLLCILYTVV). One can recognise a PNPLA domain in the interval 298–490 (LCLSGGACFA…RTDIPIDALK (193 aa)). The GXSXG motif lies at 329–333 (GTSGG). Serine 331 functions as the Nucleophile in the catalytic mechanism. Aspartate 477 serves as the catalytic Proton acceptor. Residues 680–717 (YDSESSAEETLSPGFSQGTHAVLTDESDDDSSDDEIDD) form a disordered region. Over residues 704–717 (DESDDDSSDDEIDD) the composition is skewed to acidic residues.

The protein belongs to the PLPL family.

It localises to the membrane. In terms of biological role, probable lipid hydrolase. This chain is Patatin-like phospholipase domain-containing protein PGUG_03164, found in Meyerozyma guilliermondii (strain ATCC 6260 / CBS 566 / DSM 6381 / JCM 1539 / NBRC 10279 / NRRL Y-324) (Yeast).